We begin with the raw amino-acid sequence, 481 residues long: Guanine nucleotide exchange factor C9orf72 homolog (481 aa).

One can recognise a uDENN C9ORF72-type domain in the interval 23–194; the sequence is SPLLAATFAY…ELLASMRSHS (172 aa). Residues 200–343 form the cDENN C9ORF72-type domain; it reads DIADTVLNDD…SELTAFWRAT (144 aa). Residues 370–464 enclose the dDENN C9ORF72-type domain; it reads VLHRDTLVKA…IKPGLHSFIF (95 aa). Positions 461-481 are required for the homodimerization of the C9orf72-SMCR8 complex; it reads SFIFGRPFYTSVQERDVLMTF.

In terms of assembly, component of the C9orf72-SMCR8 complex, at least composed of C9orf72, SMCR8 and WDR41. The complex is formed of two protomers, each individually consisting of one molecule each of C9orf72, SMCR8 and WDR41. The protomers homodimerize via an interaction between C9orf72 (via C-terminus) and SMCR8 (via N-terminus). Within each protomer SMCR8 (via DENN domain) acts as a bridging protein between WDR41 (via C-terminus and N-terminus) and C9orf72 (via C-terminus). The C9orf72-SMCR8 complex associates with the ULK1/ATG1 kinase complex. Interacts with ULK1/ATG1 kinase complex members ULK1, ATG13 and RB1CC1. Interacts with SMCR8; the interaction is direct. Interacts with HNRNPA1, HNRNPA2B1 and UBQLN2. Interacts with small Rab GTPase RAB1A; the interaction mediates recruitment of RAB1A to the ULK1/ATG1 kinase complex. Also interacts with small Rab GTPase RAB7A. Interacts with cofilin. Interacts with GTP-binding proteins ARF1 and ARF6. Interacts with the DLG4/PSD-95. Interacts with CARM1 (via PH domain-like fold). Interacts with RAB39A and RAB39B (in GDP-bound forms); functions as GEF for RAB39A and RAB39B.

It is found in the nucleus. It localises to the cytoplasm. Its subcellular location is the P-body. The protein resides in the stress granule. The protein localises to the endosome. It is found in the lysosome. It localises to the cytoplasmic vesicle. Its subcellular location is the autophagosome. The protein resides in the autolysosome. The protein localises to the secreted. It is found in the cell projection. It localises to the axon. Its subcellular location is the growth cone. The protein resides in the perikaryon. Its function is as follows. Acts as a guanine-nucleotide releasing factor (GEF) for Rab GTPases by promoting the conversion of inactive RAB-GDP to the active form RAB-GTP. Acts as a GEF for RAB39A which enables HOPS-mediated autophagosome-lysosome membrane tethering and fusion in mammalian autophagy. Component of the C9orf72-SMCR8 complex where both subunits display GEF activity and that regulates autophagy. As part of the C9orf72-SMCR8-WDR41 (CSW) complex, functions as GEF for RAB8A and RAB39B, thereby promoting autophagosome maturation. As part of the C9orf72-SMCR8 complex, also functions as GTPase activating protein (GAP) for RAB8A and RAB11A in vitro. The C9orf72-SMCR8 complex also acts as a regulator of autophagy initiation by interacting with the ULK1/ATG1 kinase complex and modulating its protein kinase activity. Promotes initiation of autophagy by regulating the RAB1A-dependent trafficking of the ULK1/ATG1 kinase complex to the phagophore which leads to autophagosome formation. Acts as a regulator of mTORC1 signaling by promoting phosphorylation of mTORC1 substrates. Plays a role in endosomal trafficking. May be involved in regulating the maturation of phagosomes to lysosomes. Promotes the lysosomal localization and lysosome-mediated degradation of CARM1 which leads to inhibition of starvation-induced lipid metabolism. Regulates actin dynamics in motor neurons by inhibiting the GTP-binding activity of ARF6, leading to ARF6 inactivation. This reduces the activity of the LIMK1 and LIMK2 kinases which are responsible for phosphorylation and inactivation of cofilin, leading to CFL1/cofilin activation. Positively regulates axon extension and axon growth cone size in spinal motor neurons. Required for SMCR8 protein expression and localization at pre- and post-synaptic compartments in the forebrain, also regulates protein abundance of RAB3A and GRIA1/GLUR1 in post-synaptic compartments in the forebrain and hippocampus. Plays a role within the hematopoietic system in restricting inflammation and the development of autoimmunity. The sequence is that of Guanine nucleotide exchange factor C9orf72 homolog from Rattus norvegicus (Rat).